We begin with the raw amino-acid sequence, 446 residues long: DNA repair protein RadA (446 aa).

A C4-type zinc finger spans residues 10-27 (CQACGNQQSKWLGKCPDC). Residue 96–103 (GSPGVGKS) participates in ATP binding. Residues 253–257 (KNRFG) carry the RadA KNRFG motif motif. The segment at 349–446 (DVFVNISGGV…KELSQVLEWM (98 aa)) is lon-protease-like.

It belongs to the RecA family. RadA subfamily.

DNA-dependent ATPase involved in processing of recombination intermediates, plays a role in repairing DNA breaks. Stimulates the branch migration of RecA-mediated strand transfer reactions, allowing the 3' invading strand to extend heteroduplex DNA faster. Binds ssDNA in the presence of ADP but not other nucleotides, has ATPase activity that is stimulated by ssDNA and various branched DNA structures, but inhibited by SSB. Does not have RecA's homology-searching function. This Campylobacter jejuni subsp. jejuni serotype O:2 (strain ATCC 700819 / NCTC 11168) protein is DNA repair protein RadA.